Consider the following 383-residue polypeptide: Opsin Rh3 (383 aa).

The Extracellular segment spans residues 1–57; that stretch reads MESGNVSSSLFGNVSTALRPEARLSAETRLLGWNVPPEELRHIPEHWLTYPEPPESM. The N-linked (GlcNAc...) asparagine glycan is linked to N13. A helical membrane pass occupies residues 58–82; it reads NYLLGTLYIFFTLMSMLGNGLVIWV. Topologically, residues 83 to 94 are cytoplasmic; it reads FSAAKSLRTPSN. Residues 95–119 form a helical membrane-spanning segment; the sequence is ILVINLAFCDFMMMVKTPIFIYNSF. Residues 120 to 133 lie on the Extracellular side of the membrane; the sequence is HQGYALGHLGCQIF. C130 and C207 are disulfide-bonded. A helical transmembrane segment spans residues 134–153; that stretch reads GIIGSYTGIAAGATNAFIAY. The Cytoplasmic segment spans residues 154 to 171; that stretch reads DRFNVITRPMEGKMTHGK. The helical transmembrane segment at 172 to 196 threads the bilayer; that stretch reads AIAMIIFIYMYATPWVVACYTETWG. The Extracellular segment spans residues 197–220; sequence RFVPEGYLTSCTFDYLTDNFDTRL. The chain crosses the membrane as a helical span at residues 221 to 248; sequence FVACIFFFSFVCPTTMITYYYSQIVGHV. The Cytoplasmic segment spans residues 249-284; it reads FSHEKALRDQAKKMNVESLRSNVDKNKETAEIRIAK. The helical transmembrane segment at 285–308 threads the bilayer; sequence AAITICFLFFCSWTPYGVMSLIGA. The Extracellular segment spans residues 309-316; that stretch reads FGDKTLLT. The helical transmembrane segment at 317-341 threads the bilayer; that stretch reads PGATMIPACACKMVACIDPFVYAIS. Residue K328 is modified to N6-(retinylidene)lysine. Residues 342 to 383 lie on the Cytoplasmic side of the membrane; the sequence is HPRYRMELQKRCPWLALNEKAPESSAVASTSTTQEPQQTTAA. Residues 362-383 are disordered; sequence APESSAVASTSTTQEPQQTTAA. Over residues 369 to 383 the composition is skewed to low complexity; it reads ASTSTTQEPQQTTAA.

This sequence belongs to the G-protein coupled receptor 1 family. Opsin subfamily. In terms of processing, phosphorylated on some or all of the serine and threonine residues present in the C-terminal region.

It is found in the membrane. Visual pigments are the light-absorbing molecules that mediate vision. They consist of an apoprotein, opsin, covalently linked to cis-retinal. This Drosophila melanogaster (Fruit fly) protein is Opsin Rh3 (Rh3).